A 309-amino-acid polypeptide reads, in one-letter code: MSKIRGLPPEVREPGPGVELGVENGLLCQLIHSPEFNLFSNSVVFESNFIQTHVPEADFQVTKPGNWRDVCEGSATVILGVTSSVPSLPLPNVLLMANVTWPQGPFTTWSTPGDAPVINLSRLLPLKYVELRIYDRLQRILRVRTVTEKIYYLKLHEKHPEIVFQFWVRLVKILQKGLSITTKDPRIKFTHCLVPKMPTNSTETTPENSLLSSPQPSEPLVLLAAEQTSGSFSQLSGKPQLTADRNNDTAIEIDNCSSYKIPSPVASPINLNIPMRAALSHSLWEQEDWNEHLLQVHIASYLGEHFLGA.

Phosphoserine is present on residues Ser-231, Ser-263, and Ser-267.

It belongs to the GARIN family. Interacts (via N-terminus) with RAB2B (in GTP-bound form).

It is found in the golgi apparatus. Its function is as follows. RAB2B effector protein required for accurate acrosome formation and normal male fertility. The polypeptide is Golgi-associated RAB2 interactor protein 1A (Homo sapiens (Human)).